The sequence spans 126 residues: MNQFMLLGFIAFGGAFGACARYLISELCVVLLGKGFPYGTLTVNIVGSLIMGVLMSSLNQGIIEAAPCRPIIGLGFLGALTTFSTFSMDNVILMQQGEVIKAGLNILLNVTLSITACFIGFQLMKS.

4 helical membrane-spanning segments follow: residues 4 to 24 (FMLL…RYLI), 35 to 55 (GFPY…GVLM), 71 to 91 (IIGL…MDNV), and 104 to 124 (LNIL…FQLM). Na(+)-binding residues include Gly78 and Thr81.

The protein belongs to the fluoride channel Fluc/FEX (TC 1.A.43) family.

Its subcellular location is the cell inner membrane. It carries out the reaction fluoride(in) = fluoride(out). Its activity is regulated as follows. Na(+) is not transported, but it plays an essential structural role and its presence is essential for fluoride channel function. Fluoride-specific ion channel. Important for reducing fluoride concentration in the cell, thus reducing its toxicity. This Aliivibrio salmonicida (strain LFI1238) (Vibrio salmonicida (strain LFI1238)) protein is Fluoride-specific ion channel FluC.